The primary structure comprises 263 residues: Acetylglutamate kinase (263 aa).

Substrate-binding positions include 48–49, arginine 70, and asparagine 162; that span reads GG.

It belongs to the acetylglutamate kinase family. ArgB subfamily.

The protein localises to the cytoplasm. The enzyme catalyses N-acetyl-L-glutamate + ATP = N-acetyl-L-glutamyl 5-phosphate + ADP. Its pathway is amino-acid biosynthesis; L-arginine biosynthesis; N(2)-acetyl-L-ornithine from L-glutamate: step 2/4. Its function is as follows. Catalyzes the ATP-dependent phosphorylation of N-acetyl-L-glutamate. In Vibrio vulnificus (strain YJ016), this protein is Acetylglutamate kinase.